The primary structure comprises 288 residues: Protein PGR (288 aa).

7 helical membrane passes run 1–21, 29–49, 91–111, 123–143, 177–197, 210–230, and 268–288; these read METSPQFRLIFAVIISSLIAF, LDLSGGIAGFLVMTIHFTAGF, VLCNSGIASVLVVIACTLTGW, IVTALIGGIIGHYACCNGDTW, LLAALAAGTTVGLTFLIFGLF, LLVIPLSALAGLCGSLIDSIL, and VNFVSILLTSFLTSIASVYIF.

This sequence belongs to the TMEM19 family. As to expression, expressed in the vasculature of leaves, roots, inflorescences, siliques, anther filaments and sepals. Detected primarily in the phloem tissues, including in the root ans shoot apical meristems.

It is found in the cell membrane. In terms of biological role, involved in the glucose-triggered developmental leaf growth process. In Arabidopsis thaliana (Mouse-ear cress), this protein is Protein PGR.